The following is a 617-amino-acid chain: Protein fem-1 homolog C (617 aa).

ANK repeat units lie at residues 2-31 (DLKT…KDDV), 40-70 (NGAT…SVEI), 82-111 (EGAP…SVNN), 115-144 (TNST…DLEV), 148-177 (HGHT…DVNR), 181-210 (KGNT…RMEK), and 213-242 (YGMT…TSKN). TPR repeat units lie at residues 245 to 279 (INAL…RHSD) and 338 to 371 (SYYI…QQNN). ANK repeat units follow at residues 481-523 (NNFS…DVNV) and 527-556 (EQNS…HFDS).

Belongs to the fem-1 family. In terms of assembly, component of a CRL2 E3 ubiquitin-protein ligase complex, also named ECS (Elongin BC-CUL2/5-SOCS-box protein) complex.

Its pathway is protein modification; protein ubiquitination. Substrate-recognition component of a Cul2-RING (CRL2) E3 ubiquitin-protein ligase complex of the DesCEND (destruction via C-end degrons) pathway, which recognizes a C-degron located at the extreme C terminus of target proteins, leading to their ubiquitination and degradation. The C-degron recognized by the DesCEND pathway is usually a motif of less than ten residues and can be present in full-length proteins, truncated proteins or proteolytically cleaved forms. The CRL2(FEM1C) complex specifically recognizes proteins with an arginine at the C-terminus: recognizes and binds proteins ending with -Lys/Arg-Xaa-Arg and -Lys/Arg-Xaa-Xaa-Arg C-degrons, leading to their ubiquitination and degradation. In Xenopus laevis (African clawed frog), this protein is Protein fem-1 homolog C.